The primary structure comprises 441 residues: Putative F-box/FBD/LRR-repeat protein At4g00315 (441 aa).

The 47-residue stretch at 1–47 (MDKTSQLPDELLVKVLSFLPTKDAVRTSLLSMRWKSLWMWLPKLEYD) folds into the F-box domain. 8 LRR repeats span residues 57–82 (QGLA…SLKL), 87–115 (IGSI…SLKL), 137–164 (ILKL…FLGR), 165–190 (VTYS…VVER), 211–236 (LKMS…KVTD), 243–271 (SDNE…DFVL), 293–318 (LGVY…KICS), and 319–344 (CDSD…EAYV). Residues 358–410 (QWGNQLNCVPKCLLSSLETFKWSEMYGLLQNQMDVAKYILRNARCLKSATIFF) form the FBD domain.

This chain is Putative F-box/FBD/LRR-repeat protein At4g00315, found in Arabidopsis thaliana (Mouse-ear cress).